We begin with the raw amino-acid sequence, 258 residues long: Cytochrome P450 1A2 (258 aa).

Belongs to the cytochrome P450 family. It depends on heme as a cofactor.

It is found in the endoplasmic reticulum membrane. The protein localises to the microsome membrane. It catalyses the reaction an organic molecule + reduced [NADPH--hemoprotein reductase] + O2 = an alcohol + oxidized [NADPH--hemoprotein reductase] + H2O + H(+). Cytochromes P450 are a group of heme-thiolate monooxygenases. In liver microsomes, this enzyme is involved in an NADPH-dependent electron transport pathway. It oxidizes a variety of structurally unrelated compounds, including steroids, fatty acids, and xenobiotics. This chain is Cytochrome P450 1A2 (CYP1A2), found in Gallus gallus (Chicken).